The chain runs to 1038 residues: DNA polymerase delta catalytic subunit (1038 aa).

Residues M1–E29 are disordered. 4 residues coordinate Zn(2+): C942, C945, C958, and C961. The CysA-type zinc finger occupies C942 to C961. The [4Fe-4S] cluster site is built by C992, C995, C1005, and C1010. Positions C992–C1010 match the CysB motif motif.

This sequence belongs to the DNA polymerase type-B family. In terms of assembly, heterodimer with subunits of 125 kDa and 50 kDa. The 125 kDa subunit contains the polymerase active site and most likely the active site for the 3'-5' exonuclease activity. Requires [4Fe-4S] cluster as cofactor.

It localises to the nucleus. The catalysed reaction is DNA(n) + a 2'-deoxyribonucleoside 5'-triphosphate = DNA(n+1) + diphosphate. Its function is as follows. This polymerase possesses two enzymatic activities: DNA synthesis (polymerase) and an exonucleolytic activity that degrades single-stranded DNA in the 3'- to 5'-direction. This Candida albicans (Yeast) protein is DNA polymerase delta catalytic subunit (POL3).